Consider the following 1252-residue polypeptide: Putative late blight resistance protein homolog R1B-11 (1252 aa).

The stretch at Arg-543–Gln-566 forms a coiled coil. 2 NB-ARC domains span residues Ser-684–Ile-736 and Ser-786–Gly-830. 7 LRR repeats span residues Phe-955 to Arg-980, Leu-998 to Met-1026, Leu-1077 to Ser-1100, Phe-1103 to Ala-1125, Phe-1126 to Asp-1149, Leu-1187 to Ser-1212, and Leu-1213 to Ala-1236. Residues Val-1188–Leu-1252 form the HMA domain.

This sequence belongs to the disease resistance NB-LRR family.

The protein localises to the cytoplasm. It localises to the membrane. Its function is as follows. Confers resistance to late blight (Phytophthora infestans) races carrying the avirulence gene Avr1. Resistance proteins guard the plant against pathogens that contain an appropriate avirulence protein via an indirect interaction with this avirulence protein. That triggers a defense system including the hypersensitive response, which restricts the pathogen growth. The protein is Putative late blight resistance protein homolog R1B-11 (R1B-11) of Solanum demissum (Wild potato).